We begin with the raw amino-acid sequence, 462 residues long: Squalene synthase ERG9 (462 aa).

Residues 406–426 (AVVLFGVVIAALVCISGLMLG) traverse the membrane as a helical segment.

The protein belongs to the phytoene/squalene synthase family. It depends on Mg(2+) as a cofactor.

It localises to the endoplasmic reticulum membrane. The protein localises to the microsome. It carries out the reaction 2 (2E,6E)-farnesyl diphosphate + NADPH + H(+) = squalene + 2 diphosphate + NADP(+). It catalyses the reaction 2 (2E,6E)-farnesyl diphosphate + NADH + H(+) = squalene + 2 diphosphate + NAD(+). It functions in the pathway terpene metabolism; lanosterol biosynthesis; lanosterol from farnesyl diphosphate: step 1/3. It participates in steroid metabolism; ergosterol biosynthesis. Squalene synthase; part of the third module of ergosterol biosynthesis pathway that includes the late steps of the pathway. ERG9 produces squalene from 2 farnesyl pyrophosphate moieties. The third module or late pathway involves the ergosterol synthesis itself through consecutive reactions that mainly occur in the endoplasmic reticulum (ER) membrane. Firstly, the squalene synthase ERG9 catalyzes the condensation of 2 farnesyl pyrophosphate moieties to form squalene, which is the precursor of all steroids. Squalene synthase is crucial for balancing the incorporation of farnesyl diphosphate (FPP) into sterol and nonsterol isoprene synthesis. Secondly, squalene is converted into lanosterol by the consecutive action of the squalene epoxidase ERG1 and the lanosterol synthase ERG7. Then, the delta(24)-sterol C-methyltransferase ERG6 methylates lanosterol at C-24 to produce eburicol. Eburicol is the substrate of the sterol 14-alpha demethylase encoded by CYP51A, CYP51B and CYP51C, to yield 4,4,24-trimethyl ergosta-8,14,24(28)-trienol. CYP51B encodes the enzyme primarily responsible for sterol 14-alpha-demethylation, and plays an essential role in ascospore formation. CYP51A encodes an additional sterol 14-alpha-demethylase, induced on ergosterol depletion and responsible for the intrinsic variation in azole sensitivity. The third CYP51 isoform, CYP51C, does not encode a sterol 14-alpha-demethylase, but is required for full virulence on host wheat ears. The C-14 reductase ERG24 then reduces the C14=C15 double bond which leads to 4,4-dimethylfecosterol. A sequence of further demethylations at C-4, involving the C-4 demethylation complex containing the C-4 methylsterol oxidases ERG25, the sterol-4-alpha-carboxylate 3-dehydrogenase ERG26 and the 3-keto-steroid reductase ERG27, leads to the production of fecosterol via 4-methylfecosterol. ERG28 has a role as a scaffold to help anchor ERG25, ERG26 and ERG27 to the endoplasmic reticulum. The C-8 sterol isomerase ERG2 then catalyzes the reaction which results in unsaturation at C-7 in the B ring of sterols and thus converts fecosterol to episterol. The sterol-C5-desaturases ERG3A and ERG3BB then catalyze the introduction of a C-5 double bond in the B ring to produce 5-dehydroepisterol. The C-22 sterol desaturases ERG5A and ERG5B further convert 5-dehydroepisterol into ergosta-5,7,22,24(28)-tetraen-3beta-ol by forming the C-22(23) double bond in the sterol side chain. Finally, ergosta-5,7,22,24(28)-tetraen-3beta-ol is substrate of the C-24(28) sterol reductase ERG4 to produce ergosterol. This Gibberella zeae (strain ATCC MYA-4620 / CBS 123657 / FGSC 9075 / NRRL 31084 / PH-1) (Wheat head blight fungus) protein is Squalene synthase ERG9.